The primary structure comprises 593 residues: tRNA (guanine(26)-N(2))-dimethyltransferase 1 (593 aa).

The region spanning 9–465 is the Trm1 methyltransferase domain; sequence TVIKEGEAEV…APMEIIWDIM (457 aa). An S-adenosyl-L-methionine-binding site is contributed by arginine 36. The interval 56–118 is disordered; the sequence is AMLSKRARSS…KTAYESARRE (63 aa). Composition is skewed to basic and acidic residues over residues 68-81 and 88-118; these read VVEKDVSETSKEET and DNGKTNGEHEVTTQDGPKEAAKTAYESARRE. Arginine 134, aspartate 152, and valine 185 together coordinate S-adenosyl-L-methionine. 4 residues coordinate Zn(2+): cysteine 315, cysteine 318, cysteine 350, and cysteine 353. The tract at residues 546 to 593 is disordered; that stretch reads VNGHLNNNHKEAGDEEEEEEEEEPEEDIIEGEPELKRQKTTEDFASTS. Residues 558-577 are compositionally biased toward acidic residues; it reads GDEEEEEEEEEPEEDIIEGE. Basic and acidic residues predominate over residues 578-587; sequence PELKRQKTTE.

The protein belongs to the class I-like SAM-binding methyltransferase superfamily. Trm1 family.

The catalysed reaction is guanosine(26) in tRNA + 2 S-adenosyl-L-methionine = N(2)-dimethylguanosine(26) in tRNA + 2 S-adenosyl-L-homocysteine + 2 H(+). In terms of biological role, dimethylates a single guanine residue at position 26 of most tRNAs using S-adenosyl-L-methionine as donor of the methyl groups. The protein is tRNA (guanine(26)-N(2))-dimethyltransferase 1 of Arabidopsis thaliana (Mouse-ear cress).